The following is a 509-amino-acid chain: Maturase K (509 aa).

It belongs to the intron maturase 2 family. MatK subfamily.

The protein localises to the plastid. It localises to the chloroplast. Usually encoded in the trnK tRNA gene intron. Probably assists in splicing its own and other chloroplast group II introns. This Clematis vitalba (Evergreen clematis) protein is Maturase K.